Here is a 226-residue protein sequence, read N- to C-terminus: DELTA-alicitoxin-Pse1b (226 aa).

The first 21 residues, 1–21 (MRHFVVFLYMFLALSIPTAFA), serve as a signal peptide directing secretion. Residues 22–45 (KKHIVTKKGNHQDITNDNEGENAE) constitute a propeptide that is removed on maturation. The segment at 50-59 (TVAGAVIAGG) is plays an important role in the hemolytic activity. Residues 58–77 (GGELALKILTKILYEIGKID) form an N-terminal region region. Phosphocholine contacts are provided by Ser101, Val134, Ser152, Pro154, Tyr180, and Tyr184. The trp-rich region, which is important for the binding to lipid membrane stretch occupies residues 152–167 (SVPFDYNLYSNWWNVK).

The protein belongs to the actinoporin family. Sea anemone subfamily. Octamer or nonamer in membranes. Monomer in the soluble state.

The protein resides in the secreted. Its subcellular location is the nematocyst. It localises to the target cell membrane. Its function is as follows. Pore-forming protein that forms cations-selective hydrophilic pores of around 1 nm and causes cytolysis. Pore formation is a multi-step process that involves specific recognition of membrane sphingomyelin (but neither cholesterol nor phosphatidylcholine) using aromatic rich region and adjacent phosphocholine (POC) binding site, firm binding to the membrane (mainly driven by hydrophobic interactions) accompanied by the transfer of the N-terminal region to the lipid-water interface and finally pore formation after oligomerization of monomers. The polypeptide is DELTA-alicitoxin-Pse1b (Phyllodiscus semoni (Night anemone)).